Here is a 257-residue protein sequence, read N- to C-terminus: MKSNTEIYKNLKLLEDYGTYLIEWIKLKVQQANKKGVIVGISGGIDSALVACLAKKAFPENSLGITMPIGNSMKLDFDDIAKLQKLTKLEIINIDLTLSYDALAKTLDVKNKLAKANIKPRLRMASLYAMAQEKDYLVLGTDNLDEWYLGYFTKYGDGGVDLLPISYLTKSEVISLAQIYKVDKGIIEKKPSAGLWENQEDEKELGYSYSEVDLFLRKKQIDSQIATKIEKQHQMTEHKRQLASKPMDIVDFENKER.

An ATP-binding site is contributed by 40 to 47; that stretch reads GISGGIDS. D46 contacts Mg(2+). R121 is a deamido-NAD(+) binding site. T141 contacts ATP. Residue E146 participates in Mg(2+) binding. Positions 154 and 161 each coordinate deamido-NAD(+). The ATP site is built by K170 and S192. 238 to 239 is a binding site for deamido-NAD(+); sequence HK.

The protein belongs to the NAD synthetase family. As to quaternary structure, homodimer.

It catalyses the reaction deamido-NAD(+) + NH4(+) + ATP = AMP + diphosphate + NAD(+) + H(+). The protein operates within cofactor biosynthesis; NAD(+) biosynthesis; NAD(+) from deamido-NAD(+) (ammonia route): step 1/1. Functionally, catalyzes the ATP-dependent amidation of deamido-NAD to form NAD. Uses ammonia as a nitrogen source. In Mycoplasmopsis pulmonis (strain UAB CTIP) (Mycoplasma pulmonis), this protein is NH(3)-dependent NAD(+) synthetase.